Consider the following 328-residue polypeptide: Arabinose 5-phosphate isomerase KdsD (328 aa).

One can recognise an SIS domain in the interval 42-184 (CEKMFWCKGK…AVALLKARGF (143 aa)). Substrate is bound by residues 75–76 (GT), His-82, His-88, 114–123 (ALIPVLKRLH), 148–150 (KVA), Thr-222, and Asp-275. His-82 serves as a coordination point for Zn(2+). The region spanning 210–268 (MHTGDEIPHVKKTASLRDALLEVTRKNLGMTVICDDNMMIEGIFTDGDLRRVFDMGVDV) is the CBS 1 domain. A CBS 2 domain is found at 277 to 328 (MTPGGIRVRPGILAVEALNLMQSRHITSVMVADGDHLLGVLHMHDLLRAGVV).

The protein belongs to the SIS family. GutQ/KpsF subfamily. In terms of assembly, homotetramer.

The enzyme catalyses D-arabinose 5-phosphate = D-ribulose 5-phosphate. It functions in the pathway carbohydrate biosynthesis; 3-deoxy-D-manno-octulosonate biosynthesis; 3-deoxy-D-manno-octulosonate from D-ribulose 5-phosphate: step 1/3. It participates in bacterial outer membrane biogenesis; lipopolysaccharide biosynthesis. Functionally, involved in the biosynthesis of 3-deoxy-D-manno-octulosonate (KDO), a unique 8-carbon sugar component of lipopolysaccharides (LPSs). Catalyzes the reversible aldol-ketol isomerization between D-ribulose 5-phosphate (Ru5P) and D-arabinose 5-phosphate (A5P). This chain is Arabinose 5-phosphate isomerase KdsD (kdsD), found in Escherichia coli O157:H7.